A 485-amino-acid chain; its full sequence is Glutamyl-tRNA(Gln) amidotransferase subunit A (485 aa).

Catalysis depends on charge relay system residues Lys79 and Ser154. Ser178 acts as the Acyl-ester intermediate in catalysis.

Belongs to the amidase family. GatA subfamily. Heterotrimer of A, B and C subunits.

The catalysed reaction is L-glutamyl-tRNA(Gln) + L-glutamine + ATP + H2O = L-glutaminyl-tRNA(Gln) + L-glutamate + ADP + phosphate + H(+). Functionally, allows the formation of correctly charged Gln-tRNA(Gln) through the transamidation of misacylated Glu-tRNA(Gln) in organisms which lack glutaminyl-tRNA synthetase. The reaction takes place in the presence of glutamine and ATP through an activated gamma-phospho-Glu-tRNA(Gln). The chain is Glutamyl-tRNA(Gln) amidotransferase subunit A from Desulforamulus reducens (strain ATCC BAA-1160 / DSM 100696 / MI-1) (Desulfotomaculum reducens).